Consider the following 537-residue polypeptide: Probable alpha-galactosidase A (537 aa).

The first 23 residues, Met-1–Gly-23, serve as a signal peptide directing secretion. Cys-46 and Cys-78 are disulfide-bonded. Residues Asn-49, Asn-87, Asn-93, and Asn-123 are each glycosylated (N-linked (GlcNAc...) asparagine). Cys-126 and Cys-156 are oxidised to a cystine. Catalysis depends on Asp-154, which acts as the Nucleophile. N-linked (GlcNAc...) asparagine glycosylation is present at Asn-203. The active-site Proton donor is the Asp-212. N-linked (GlcNAc...) asparagine glycans are attached at residues Asn-355 and Asn-436. The 125-residue stretch at Cys-413–Ser-537 folds into the Ricin B-type lectin domain. 2 cysteine pairs are disulfide-bonded: Cys-430–Cys-444 and Cys-469–Cys-482. Asn-491 carries an N-linked (GlcNAc...) asparagine glycan.

Belongs to the glycosyl hydrolase 27 family.

The protein resides in the secreted. The catalysed reaction is Hydrolysis of terminal, non-reducing alpha-D-galactose residues in alpha-D-galactosides, including galactose oligosaccharides, galactomannans and galactolipids.. Its function is as follows. Hydrolyzes a variety of simple alpha-D-galactoside as well as more complex molecules such as oligosaccharides and polysaccharides. This is Probable alpha-galactosidase A (aglA) from Aspergillus niger (strain ATCC MYA-4892 / CBS 513.88 / FGSC A1513).